Reading from the N-terminus, the 255-residue chain is Hydroxyethylthiazole kinase (255 aa).

Position 38 (Met38) interacts with substrate. ATP-binding residues include Arg114 and Thr160. Substrate is bound at residue Gly187.

The protein belongs to the Thz kinase family. The cofactor is Mg(2+).

It carries out the reaction 5-(2-hydroxyethyl)-4-methylthiazole + ATP = 4-methyl-5-(2-phosphooxyethyl)-thiazole + ADP + H(+). It functions in the pathway cofactor biosynthesis; thiamine diphosphate biosynthesis; 4-methyl-5-(2-phosphoethyl)-thiazole from 5-(2-hydroxyethyl)-4-methylthiazole: step 1/1. Functionally, catalyzes the phosphorylation of the hydroxyl group of 4-methyl-5-beta-hydroxyethylthiazole (THZ). The sequence is that of Hydroxyethylthiazole kinase from Lysinibacillus sphaericus (strain C3-41).